The chain runs to 320 residues: Putative thiosulfate sulfurtransferase 2 (320 aa).

2 consecutive Rhodanese domains span residues 18-125 and 154-267; these read HAPK…PLSS and AINV…HACP. Cysteine 233 (cysteine persulfide intermediate) is an active-site residue. A substrate-binding site is contributed by arginine 238.

The enzyme catalyses thiosulfate + hydrogen cyanide = thiocyanate + sulfite + 2 H(+). In terms of biological role, may be a sulfotransferase involved in the formation of thiosulfate. This Mycobacterium bovis (strain ATCC BAA-935 / AF2122/97) protein is Putative thiosulfate sulfurtransferase 2 (cysA2).